The primary structure comprises 106 residues: Large ribosomal subunit protein eL42 (106 aa).

Zn(2+)-binding residues include Cys12, Cys17, Cys74, and Cys77.

Belongs to the eukaryotic ribosomal protein eL42 family. In terms of assembly, component of the large ribosomal subunit. Mature ribosomes consist of a small (40S) and a large (60S) subunit. The 40S subunit contains about 32 different proteins and 1 molecule of RNA (18S). The 60S subunit contains 45 different proteins and 3 molecules of RNA (25S, 5.8S and 5S). It depends on Zn(2+) as a cofactor.

It is found in the cytoplasm. Its function is as follows. Component of the ribosome, a large ribonucleoprotein complex responsible for the synthesis of proteins in the cell. The small ribosomal subunit (SSU) binds messenger RNAs (mRNAs) and translates the encoded message by selecting cognate aminoacyl-transfer RNA (tRNA) molecules. The large subunit (LSU) contains the ribosomal catalytic site termed the peptidyl transferase center (PTC), which catalyzes the formation of peptide bonds, thereby polymerizing the amino acids delivered by tRNAs into a polypeptide chain. The nascent polypeptides leave the ribosome through a tunnel in the LSU and interact with protein factors that function in enzymatic processing, targeting, and the membrane insertion of nascent chains at the exit of the ribosomal tunnel. In Candida albicans (strain SC5314 / ATCC MYA-2876) (Yeast), this protein is Large ribosomal subunit protein eL42 (RPL44).